Consider the following 459-residue polypeptide: Endoglucanase EG-1 (459 aa).

Residues 1-22 form the signal peptide; it reads MAPSVTLPLTTAILAIARLVAA. Q23 carries the post-translational modification Pyrrolidone carboxylic acid. The interval 23 to 397 is catalytic; the sequence is QQPGTSTPEV…DIGSTTNSTA (375 aa). 8 disulfides stabilise this stretch: C41–C47, C71–C92, C82–C88, C161–C360, C193–C216, C197–C215, C236–C241, and C246–C315. A glycan (N-linked (GlcNAc) asparagine) is linked at N78. An N-linked (GlcNAc...) (high mannose) asparagine glycan is attached at N204. E218 acts as the Nucleophile in catalysis. E223 acts as the Proton donor/acceptor in catalysis. Residues 390-425 are disordered; the sequence is GSTTNSTAPPPPPASSTTFSTTRRSSTTSSSPSCTQ. N-linked (GlcNAc...) asparagine glycosylation occurs at N394. The linker stretch occupies residues 398-423; sequence PPPPPASSTTFSTTRRSSTTSSSPSC. The span at 404-425 shows a compositional bias: low complexity; it reads SSTTFSTTRRSSTTSSSPSCTQ. Intrachain disulfides connect C423–C439, C431–C448, and C442–C458. A CBM1 domain is found at 423–459; the sequence is CTQTHWGQCGGIGYSGCKTCTSGTTCQYSNDYYSQCL.

Belongs to the glycosyl hydrolase 7 (cellulase C) family. In terms of processing, asn-204 contains mainly a high-mannose-type glycan (Hex(7-9)GlcNAc(2)), with a small fraction (8%) bearing a single GlcNAc at this site.

Its subcellular location is the secreted. It catalyses the reaction Endohydrolysis of (1-&gt;4)-beta-D-glucosidic linkages in cellulose, lichenin and cereal beta-D-glucans.. Functionally, endoglucanase (EG) that cleaves the internal beta-1,4-glucosidic bonds in cellulose. The degradation of cellulose involves an interplay between different cellulolytic enzymes. Hydrolysis starts with EGs, which cut internal glycosidic linkages to reduce the polymerization degree of the substrate and creates new chain ends for exocellobiohydrolases (CBHs). The CBH release the disaccharide cellobiose from the non-reducing end of the cellulose polymer chain. Finally, beta-1,4-glucosidases hydrolyze the cellobiose and other short cello-oligosaccharides into glucose units. The sequence is that of Endoglucanase EG-1 (egl1) from Hypocrea jecorina (Trichoderma reesei).